Reading from the N-terminus, the 341-residue chain is N-acetyl-gamma-glutamyl-phosphate reductase (341 aa).

Cys-151 is a catalytic residue.

Belongs to the NAGSA dehydrogenase family. Type 1 subfamily.

Its subcellular location is the cytoplasm. The enzyme catalyses N-acetyl-L-glutamate 5-semialdehyde + phosphate + NADP(+) = N-acetyl-L-glutamyl 5-phosphate + NADPH + H(+). It participates in amino-acid biosynthesis; L-arginine biosynthesis; N(2)-acetyl-L-ornithine from L-glutamate: step 3/4. Its function is as follows. Catalyzes the NADPH-dependent reduction of N-acetyl-5-glutamyl phosphate to yield N-acetyl-L-glutamate 5-semialdehyde. This is N-acetyl-gamma-glutamyl-phosphate reductase from Chlorobaculum tepidum (strain ATCC 49652 / DSM 12025 / NBRC 103806 / TLS) (Chlorobium tepidum).